The chain runs to 234 residues: Enterobactin synthase component D (234 aa).

Residues D107, E109, and E152 each coordinate Mg(2+).

The protein belongs to the P-Pant transferase superfamily. EntD family. EntB, EntD, EntE, and EntF form a multienzyme complex called enterobactin synthase. Mg(2+) serves as cofactor.

The protein localises to the membrane. The catalysed reaction is apo-[aryl-carrier protein] + CoA = holo-[aryl-carrier protein] + adenosine 3',5'-bisphosphate + H(+). It catalyses the reaction apo-[peptidyl-carrier protein] + CoA = holo-[peptidyl-carrier protein] + adenosine 3',5'-bisphosphate + H(+). It participates in siderophore biosynthesis; enterobactin biosynthesis. In terms of biological role, involved in the biosynthesis of the siderophore enterobactin (enterochelin), which is a macrocyclic trimeric lactone of N-(2,3-dihydroxybenzoyl)-serine. The serine trilactone serves as a scaffolding for the three catechol functionalities that provide hexadentate coordination for the tightly ligated iron(2+) atoms. Plays an essential role in the assembly of the enterobactin by catalyzing the transfer of the 4'-phosphopantetheine (Ppant) moiety from coenzyme A to the apo-domains of both EntB (ArCP domain) and EntF (PCP domain) to yield their holo-forms which make them competent for the activation of 2,3-dihydroxybenzoate (DHB) and L-serine, respectively. The sequence is that of Enterobactin synthase component D from Salmonella typhi.